A 347-amino-acid chain; its full sequence is UDP-3-O-acylglucosamine N-acyltransferase (347 aa).

The active-site Proton acceptor is His241.

It belongs to the transferase hexapeptide repeat family. LpxD subfamily. In terms of assembly, homotrimer.

The catalysed reaction is a UDP-3-O-[(3R)-3-hydroxyacyl]-alpha-D-glucosamine + a (3R)-hydroxyacyl-[ACP] = a UDP-2-N,3-O-bis[(3R)-3-hydroxyacyl]-alpha-D-glucosamine + holo-[ACP] + H(+). The protein operates within bacterial outer membrane biogenesis; LPS lipid A biosynthesis. In terms of biological role, catalyzes the N-acylation of UDP-3-O-acylglucosamine using 3-hydroxyacyl-ACP as the acyl donor. Is involved in the biosynthesis of lipid A, a phosphorylated glycolipid that anchors the lipopolysaccharide to the outer membrane of the cell. This Neisseria gonorrhoeae (strain ATCC 700825 / FA 1090) protein is UDP-3-O-acylglucosamine N-acyltransferase.